A 309-amino-acid chain; its full sequence is Protein FdhE (309 aa).

The protein belongs to the FdhE family.

It localises to the cytoplasm. Functionally, necessary for formate dehydrogenase activity. This is Protein FdhE from Escherichia coli (strain SMS-3-5 / SECEC).